The following is a 598-amino-acid chain: Elongation factor 4 (598 aa).

The 183-residue stretch at 3–185 folds into the tr-type G domain; the sequence is QHIRNFSIIA…MIVAQIPPPE (183 aa). Residues 15-20 and 132-135 each bind GTP; these read DHGKST and NKID.

The protein belongs to the TRAFAC class translation factor GTPase superfamily. Classic translation factor GTPase family. LepA subfamily.

The protein resides in the cell inner membrane. It carries out the reaction GTP + H2O = GDP + phosphate + H(+). Its function is as follows. Required for accurate and efficient protein synthesis under certain stress conditions. May act as a fidelity factor of the translation reaction, by catalyzing a one-codon backward translocation of tRNAs on improperly translocated ribosomes. Back-translocation proceeds from a post-translocation (POST) complex to a pre-translocation (PRE) complex, thus giving elongation factor G a second chance to translocate the tRNAs correctly. Binds to ribosomes in a GTP-dependent manner. The sequence is that of Elongation factor 4 from Nitrosomonas europaea (strain ATCC 19718 / CIP 103999 / KCTC 2705 / NBRC 14298).